The following is a 740-amino-acid chain: Phosphoribosylformylglycinamidine synthase subunit PurL (740 aa).

Residue histidine 50 is part of the active site. ATP-binding residues include tyrosine 53 and lysine 92. Residue glutamate 94 coordinates Mg(2+). Substrate is bound by residues 95 to 98 (SHNH) and arginine 117. Catalysis depends on histidine 96, which acts as the Proton acceptor. Aspartate 118 serves as a coordination point for Mg(2+). Glutamine 241 serves as a coordination point for substrate. Residue aspartate 269 participates in Mg(2+) binding. Substrate is bound at residue 313–315 (ESQ). The ATP site is built by aspartate 495 and glycine 532. Asparagine 533 serves as a coordination point for Mg(2+). Serine 535 lines the substrate pocket.

It belongs to the FGAMS family. As to quaternary structure, monomer. Part of the FGAM synthase complex composed of 1 PurL, 1 PurQ and 2 PurS subunits.

The protein localises to the cytoplasm. The catalysed reaction is N(2)-formyl-N(1)-(5-phospho-beta-D-ribosyl)glycinamide + L-glutamine + ATP + H2O = 2-formamido-N(1)-(5-O-phospho-beta-D-ribosyl)acetamidine + L-glutamate + ADP + phosphate + H(+). It functions in the pathway purine metabolism; IMP biosynthesis via de novo pathway; 5-amino-1-(5-phospho-D-ribosyl)imidazole from N(2)-formyl-N(1)-(5-phospho-D-ribosyl)glycinamide: step 1/2. Its function is as follows. Part of the phosphoribosylformylglycinamidine synthase complex involved in the purines biosynthetic pathway. Catalyzes the ATP-dependent conversion of formylglycinamide ribonucleotide (FGAR) and glutamine to yield formylglycinamidine ribonucleotide (FGAM) and glutamate. The FGAM synthase complex is composed of three subunits. PurQ produces an ammonia molecule by converting glutamine to glutamate. PurL transfers the ammonia molecule to FGAR to form FGAM in an ATP-dependent manner. PurS interacts with PurQ and PurL and is thought to assist in the transfer of the ammonia molecule from PurQ to PurL. The chain is Phosphoribosylformylglycinamidine synthase subunit PurL from Brucella abortus (strain S19).